The chain runs to 112 residues: Large ribosomal subunit protein mL53 (112 aa).

Belongs to the mitochondrion-specific ribosomal protein mL53 family. As to quaternary structure, component of the mitochondrial ribosome large subunit (39S) which comprises a 16S rRNA and about 50 distinct proteins.

It is found in the mitochondrion. This chain is Large ribosomal subunit protein mL53 (MRPL53), found in Bos taurus (Bovine).